The sequence spans 120 residues: Large ribosomal subunit protein bL12 (120 aa).

Belongs to the bacterial ribosomal protein bL12 family. As to quaternary structure, homodimer. Part of the ribosomal stalk of the 50S ribosomal subunit. Forms a multimeric L10(L12)X complex, where L10 forms an elongated spine to which 2 to 4 L12 dimers bind in a sequential fashion. Binds GTP-bound translation factors.

Its function is as follows. Forms part of the ribosomal stalk which helps the ribosome interact with GTP-bound translation factors. Is thus essential for accurate translation. The chain is Large ribosomal subunit protein bL12 from Pseudoalteromonas translucida (strain TAC 125).